Reading from the N-terminus, the 384-residue chain is S-adenosylmethionine synthase (384 aa).

ATP is bound at residue His-16. Position 18 (Asp-18) interacts with Mg(2+). Glu-44 provides a ligand contact to K(+). L-methionine contacts are provided by Glu-57 and Gln-100. Residues Gln-100–Glu-110 are flexible loop. ATP contacts are provided by residues Asp-165–Lys-167, Asp-240, Arg-246–Lys-247, Ala-263, and Lys-267. Asp-240 contacts L-methionine. Lys-271 contributes to the L-methionine binding site.

Belongs to the AdoMet synthase family. In terms of assembly, homotetramer; dimer of dimers. Mg(2+) is required as a cofactor. Requires K(+) as cofactor.

The protein localises to the cytoplasm. The catalysed reaction is L-methionine + ATP + H2O = S-adenosyl-L-methionine + phosphate + diphosphate. It functions in the pathway amino-acid biosynthesis; S-adenosyl-L-methionine biosynthesis; S-adenosyl-L-methionine from L-methionine: step 1/1. Its function is as follows. Catalyzes the formation of S-adenosylmethionine (AdoMet) from methionine and ATP. The overall synthetic reaction is composed of two sequential steps, AdoMet formation and the subsequent tripolyphosphate hydrolysis which occurs prior to release of AdoMet from the enzyme. The polypeptide is S-adenosylmethionine synthase (Teredinibacter turnerae (strain ATCC 39867 / T7901)).